The following is a 187-amino-acid chain: Preprocaerulein clone PXC202 (187 aa).

The propeptide occupies 1 to 9 (NDERRFADG). The interval 1–21 (NDERRFADGQQDYTGWMDFGR) is disordered. Sulfotyrosine is present on Tyr-13. A Phenylalanine amide modification is found at Phe-19. A propeptide spanning residues 23–73 (DDEDDVNERDVRGFGSFLGKALKAALKIGANALGGSPQQREANDERRFADG) is cleaved from the precursor. Residue Tyr-77 is modified to Sulfotyrosine. The residue at position 83 (Phe-83) is a Phenylalanine amide. A propeptide spanning residues 87–137 (DDEDDVNERDVRGFGSFLGKALKAALKIGANALGGSLQQREVNDERRFADG) is cleaved from the precursor. Sulfotyrosine is present on Tyr-141. At Phe-147 the chain carries Phenylalanine amide. Residues 151-152 (DG) constitute a propeptide that is removed on maturation. Residue Tyr-156 is modified to Sulfotyrosine. Phe-162 carries the phenylalanine amide modification. A propeptide spanning residues 166–187 (DDEDDVHERDVRGFGSFLGKAL) is cleaved from the precursor.

The protein belongs to the gastrin/cholecystokinin family. In terms of tissue distribution, expressed by the skin glands.

Its subcellular location is the secreted. Functionally, the pharmacological activities of caerulein are quite similar to the physiological activities of gastrin and related peptides. The protein is Preprocaerulein clone PXC202 of Xenopus laevis (African clawed frog).